The primary structure comprises 175 residues: ATP synthase subunit delta (175 aa).

The protein belongs to the ATPase delta chain family. In terms of assembly, F-type ATPases have 2 components, F(1) - the catalytic core - and F(0) - the membrane proton channel. F(1) has five subunits: alpha(3), beta(3), gamma(1), delta(1), epsilon(1). F(0) has three main subunits: a(1), b(2) and c(10-14). The alpha and beta chains form an alternating ring which encloses part of the gamma chain. F(1) is attached to F(0) by a central stalk formed by the gamma and epsilon chains, while a peripheral stalk is formed by the delta and b chains.

The protein resides in the cell inner membrane. Functionally, f(1)F(0) ATP synthase produces ATP from ADP in the presence of a proton or sodium gradient. F-type ATPases consist of two structural domains, F(1) containing the extramembraneous catalytic core and F(0) containing the membrane proton channel, linked together by a central stalk and a peripheral stalk. During catalysis, ATP synthesis in the catalytic domain of F(1) is coupled via a rotary mechanism of the central stalk subunits to proton translocation. In terms of biological role, this protein is part of the stalk that links CF(0) to CF(1). It either transmits conformational changes from CF(0) to CF(1) or is implicated in proton conduction. This is ATP synthase subunit delta from Xanthomonas oryzae pv. oryzae (strain PXO99A).